The chain runs to 290 residues: Bifunctional protein FolD (290 aa).

NADP(+) contacts are provided by residues 167 to 169, S192, and I233; that span reads GRS.

The protein belongs to the tetrahydrofolate dehydrogenase/cyclohydrolase family. As to quaternary structure, homodimer.

It catalyses the reaction (6R)-5,10-methylene-5,6,7,8-tetrahydrofolate + NADP(+) = (6R)-5,10-methenyltetrahydrofolate + NADPH. The enzyme catalyses (6R)-5,10-methenyltetrahydrofolate + H2O = (6R)-10-formyltetrahydrofolate + H(+). The protein operates within one-carbon metabolism; tetrahydrofolate interconversion. In terms of biological role, catalyzes the oxidation of 5,10-methylenetetrahydrofolate to 5,10-methenyltetrahydrofolate and then the hydrolysis of 5,10-methenyltetrahydrofolate to 10-formyltetrahydrofolate. This chain is Bifunctional protein FolD, found in Gloeobacter violaceus (strain ATCC 29082 / PCC 7421).